Here is a 345-residue protein sequence, read N- to C-terminus: tRNA pseudouridine synthase B (345 aa).

Asp-39 serves as the catalytic Nucleophile.

It belongs to the pseudouridine synthase TruB family. Type 1 subfamily.

It carries out the reaction uridine(55) in tRNA = pseudouridine(55) in tRNA. In terms of biological role, responsible for synthesis of pseudouridine from uracil-55 in the psi GC loop of transfer RNAs. This chain is tRNA pseudouridine synthase B, found in Rickettsia africae (strain ESF-5).